The following is a 233-amino-acid chain: Ribose-5-phosphate isomerase A (233 aa).

Substrate-binding positions include 31 to 34 (SGST), 87 to 90 (DGAD), and 100 to 103 (KGGG). Catalysis depends on E109, which acts as the Proton acceptor. Residue K127 participates in substrate binding.

Belongs to the ribose 5-phosphate isomerase family. As to quaternary structure, homodimer.

It catalyses the reaction aldehydo-D-ribose 5-phosphate = D-ribulose 5-phosphate. It functions in the pathway carbohydrate degradation; pentose phosphate pathway; D-ribose 5-phosphate from D-ribulose 5-phosphate (non-oxidative stage): step 1/1. Its function is as follows. Catalyzes the reversible conversion of ribose-5-phosphate to ribulose 5-phosphate. This Chlamydia felis (strain Fe/C-56) (Chlamydophila felis) protein is Ribose-5-phosphate isomerase A.